We begin with the raw amino-acid sequence, 316 residues long: Probable cell division protein WhiA (316 aa).

A DNA-binding region (H-T-H motif) is located at residues 275-309; sequence TLKELGEMVASGKISKSGINHRLRKLDEIAEQLRT.

This sequence belongs to the WhiA family.

Functionally, involved in cell division and chromosome segregation. This chain is Probable cell division protein WhiA, found in Bacillus velezensis (strain DSM 23117 / BGSC 10A6 / LMG 26770 / FZB42) (Bacillus amyloliquefaciens subsp. plantarum).